The primary structure comprises 89 residues: MENKKVAKALPIQDPYLNALRKEKINVAIYLVNGVKLQGRVDSFDQFVVLLRSNVTQMVYKHAISTIVPARDPKAYEFEAQETEAKDSE.

A Sm domain is found at Asp14 to Pro73.

The protein belongs to the Hfq family. In terms of assembly, homohexamer.

RNA chaperone that binds small regulatory RNA (sRNAs) and mRNAs to facilitate mRNA translational regulation in response to envelope stress, environmental stress and changes in metabolite concentrations. Also binds with high specificity to tRNAs. The protein is RNA-binding protein Hfq of Hydrogenovibrio crunogenus (strain DSM 25203 / XCL-2) (Thiomicrospira crunogena).